A 311-amino-acid polypeptide reads, in one-letter code: Immune-associated nucleotide-binding protein 7 (311 aa).

The AIG1-type G domain maps to 14-222 (KQAENIVLVG…YTDDTYHMIK (209 aa)). Residues 23 to 30 (GRTGNGKS) are G1. GTP contacts are provided by residues 23-31 (GRTGNGKSA) and serine 44. The G2 stretch occupies residues 50 to 54 (GVTMK). A G3 region spans residues 72 to 75 (DTPG). The G4 stretch occupies residues 142 to 145 (TGGD). The tract at residues 181 to 183 (DNK) is G5. Asparagine 182 contacts GTP. A coiled-coil region spans residues 218–295 (YHMIKEESEK…TQENNELNLA (78 aa)).

Belongs to the TRAFAC class TrmE-Era-EngA-EngB-Septin-like GTPase superfamily. AIG1/Toc34/Toc159-like paraseptin GTPase family. IAN subfamily. As to expression, ubiquitous.

The protein is Immune-associated nucleotide-binding protein 7 of Arabidopsis thaliana (Mouse-ear cress).